Here is a 69-residue protein sequence, read N- to C-terminus: DNA-directed RNA polymerase subunit epsilon (69 aa).

Belongs to the RNA polymerase subunit epsilon family. RNAP is composed of a core of 2 alpha, a beta and a beta' subunit. The core is associated with a delta subunit, and at least one of epsilon or omega. When a sigma factor is associated with the core the holoenzyme is formed, which can initiate transcription.

It carries out the reaction RNA(n) + a ribonucleoside 5'-triphosphate = RNA(n+1) + diphosphate. A non-essential component of RNA polymerase (RNAP). In Lysinibacillus sphaericus (strain C3-41), this protein is DNA-directed RNA polymerase subunit epsilon.